Consider the following 198-residue polypeptide: Ribonuclease HII (198 aa).

The RNase H type-2 domain maps to 2-191 (VLECGVDETG…IRELLVGKDN (190 aa)). A divalent metal cation contacts are provided by Asp8, Glu9, and Asp100.

It belongs to the RNase HII family. Mn(2+) is required as a cofactor. Mg(2+) serves as cofactor.

It localises to the cytoplasm. It catalyses the reaction Endonucleolytic cleavage to 5'-phosphomonoester.. Its function is as follows. Endonuclease that specifically degrades the RNA of RNA-DNA hybrids. The chain is Ribonuclease HII from Desulforamulus reducens (strain ATCC BAA-1160 / DSM 100696 / MI-1) (Desulfotomaculum reducens).